The chain runs to 294 residues: tRNA dimethylallyltransferase (294 aa).

11–18 (GPTAVGKT) serves as a coordination point for ATP. 13-18 (TAVGKT) lines the substrate pocket. The tract at residues 36–39 (DSQQ) is interaction with substrate tRNA.

This sequence belongs to the IPP transferase family. In terms of assembly, monomer. Requires Mg(2+) as cofactor.

It catalyses the reaction adenosine(37) in tRNA + dimethylallyl diphosphate = N(6)-dimethylallyladenosine(37) in tRNA + diphosphate. In terms of biological role, catalyzes the transfer of a dimethylallyl group onto the adenine at position 37 in tRNAs that read codons beginning with uridine, leading to the formation of N6-(dimethylallyl)adenosine (i(6)A). The protein is tRNA dimethylallyltransferase of Lactococcus lactis subsp. lactis (strain IL1403) (Streptococcus lactis).